A 315-amino-acid chain; its full sequence is MDNNGVKPAVSAMEAFEKLEKVGEGTYGKVYRAREKATGMIVALKKTRLHEDEEGVPPTTLREISILRMLARDPHIVRLMDVKQGINKEGKTVLYLVFEYVDTDLKKFIRSFRQAGQNIPQNTVKCLMYQLCKGMAFCHGHGVLHRDLKPHNLLMDRKTMTLKIADLGLARAFTLPMKKYTHEILTLWYRAPEVLLGATHYSTGVDMWSVGCIFAELVTKQAIFAGDSELQQLLRIFRLLGTPNEEVWPGVSKLKDWHEYPQWKPLSLSTAVPNLDEAGLDLLSKMLEYEPAKRISAKKAMEHPYFDDLPDKSSL.

The Protein kinase domain maps to phenylalanine 16–phenylalanine 306. Residues valine 22–valine 30 and lysine 45 each bind ATP. A Phosphotyrosine modification is found at tyrosine 27. The Proton acceptor role is filled by aspartate 147. Threonine 181 is modified (phosphothreonine).

Belongs to the protein kinase superfamily. CMGC Ser/Thr protein kinase family. CDC2/CDKX subfamily. In terms of tissue distribution, expressed in flowers.

The catalysed reaction is L-seryl-[protein] + ATP = O-phospho-L-seryl-[protein] + ADP + H(+). It carries out the reaction L-threonyl-[protein] + ATP = O-phospho-L-threonyl-[protein] + ADP + H(+). It catalyses the reaction [DNA-directed RNA polymerase] + ATP = phospho-[DNA-directed RNA polymerase] + ADP + H(+). The sequence is that of Cyclin-dependent kinase B2-2 (CDKB2-2) from Arabidopsis thaliana (Mouse-ear cress).